Consider the following 419-residue polypeptide: Gamma-glutamyl phosphate reductase (419 aa).

The protein belongs to the gamma-glutamyl phosphate reductase family.

It is found in the cytoplasm. It carries out the reaction L-glutamate 5-semialdehyde + phosphate + NADP(+) = L-glutamyl 5-phosphate + NADPH + H(+). It participates in amino-acid biosynthesis; L-proline biosynthesis; L-glutamate 5-semialdehyde from L-glutamate: step 2/2. In terms of biological role, catalyzes the NADPH-dependent reduction of L-glutamate 5-phosphate into L-glutamate 5-semialdehyde and phosphate. The product spontaneously undergoes cyclization to form 1-pyrroline-5-carboxylate. The polypeptide is Gamma-glutamyl phosphate reductase (Yersinia enterocolitica serotype O:8 / biotype 1B (strain NCTC 13174 / 8081)).